Here is a 190-residue protein sequence, read N- to C-terminus: High affinity copper uptake protein 1 (190 aa).

The disordered stretch occupies residues 1 to 35; that stretch reads MDHSHHMGMSYMDSNSTMQPSHHHPTTSASHSHGG. The Extracellular segment spans residues 1-61; the sequence is MDHSHHMGMS…KNVELLFSGL (61 aa). The short motif at 5–6 is the Bis-His motif element; that stretch reads HH. The Methionine segments (Mets) motif motif lies at 7–12; it reads MGMSYM. Asn-15 is a glycosylation site (N-linked (GlcNAc...) asparagine). The span at 26–35 shows a compositional bias: low complexity; that stretch reads TTSASHSHGG. O-linked (GalNAc...) threonine glycosylation is present at Thr-27. A helical membrane pass occupies residues 62 to 82; sequence VINTAGEMAGAFVAVFLLAMF. Over 83–132 the chain is Cytoplasmic; that stretch reads YEGLKIARESLLRKSQVSIRYNSMPVPGPNGTILMETHKTVGQQMLSFPH. Phosphothreonine is present on Thr-114. Residues 133-153 form a helical membrane-spanning segment; that stretch reads LLQTVLHIIQVVISYFLMLIF. The Extracellular portion of the chain corresponds to 154–156; sequence MTY. The helical transmembrane segment at 157–177 threads the bilayer; that stretch reads NGYLCIAVAAGAGTGYFLFSW. The Cytoplasmic segment spans residues 178 to 190; the sequence is KKAVVVDITEHCH. The residue at position 189 (Cys-189) is a Cysteine sulfenic acid (-SOH).

This sequence belongs to the copper transporter (Ctr) (TC 1.A.56) family. SLC31A subfamily. In terms of assembly, homotrimer; is stabilized by cisplatin via interactions between cisplatin and the methionine-rich clusters, and could be crucial for the copper(2+) reduction process and copper(1+) stabilization. Heterotrimer between SLC31A1, CCS and SOD1; this heterotrimer is copper(1+)-mediated and its maintenance is regulated through SOD1 activation. Interacts with KDR; this interaction is induced upon VEGFA stimulation leading to SLC31A1 and KDR subsequent co-internalization to early endosomes, thereby activating KDR downstream signaling in endothelial cells. Interacts (via C-terminal domain) with ATOX1 (via dimer form); this interaction improves ATOX1 stability and controls intracellular copper(1+) levels. Interacts with SLC31A2; this interaction stabilizes SLC31A2 and protects its from ubiquitination and degradation. Interacts (via C-terminal domain) with CCS; this interaction is copper(1+)-mediated. O-Glycosylation at Thr-27 protects from proteolytic cleavage in the N-terminal extracellular domain. Post-translationally, proteolytic cleavage, leading to a truncated form, is facilitated by SLC31A2 and initiated preferentially by CTSL and to a minor extend by CTSB in endolysosomal compartments. In vitro, is cleaved by CTSL/cathepsin L between residues 8 and 9 from the amino terminus. A post-CTSL/cathepsin L processing occurs to yield to the fully truncated form. In terms of processing, sulfenylated at Cys-189 after stimulation with VEGFA, which induces SLC31A1-KDR disulfide bond formation and their co-internalization to early endosomes, driving to a sustained VEGFR2 signaling.

The protein resides in the cell membrane. It is found in the early endosome membrane. Its subcellular location is the recycling endosome membrane. It localises to the apical cell membrane. The protein localises to the late endosome membrane. The protein resides in the basolateral cell membrane. It carries out the reaction Ag(+)(out) = Ag(+)(in). The enzyme catalyses Cu(+)(out) = Cu(+)(in). Its activity is regulated as follows. Copper(1+) transport is stimulated by extracellular acidic pH and high potassium ions concentrations. Copper(1+) import is regulated by a copper(1+)-dependent recycling of SLC31A1. Functionally, uniporter that mediates the transport of copper(1+) from the extracellular space to the cytoplasm, across the plasma membrane and delivers directly copper(1+) to specific chaperone such as ATOX1, via a copper(1+)- mediated transient interaction between the C-terminal domain and a copper(1+) chaperone, thus controlling intracellular copper(1+) levels. May function in copper(1+) import from the apical membrane thus may drive intestinal copper absorption. The copper(1+) transport mechanism is sodium-independent, saturable and of high-affinity. Also mediates the uptake of silver(1+). May function in the influx of the platinum-containing chemotherapeutic agents. The platinum-containing chemotherapeutic agents uptake is saturable. In vitro, mediates the transport of cadmium(2+) into cells. Also participates in the first step of copper(2+) acquisition by cells through a direct transfer of copper(2+) from copper(2+) carriers in blood, such as ALB to the N-terminal domain of SLC31A1, leading to copper(2+) reduction and probably followed by copper(1+) stabilization. In addition, functions as a redox sensor to promote angiogenesis in endothelial cells, in a copper(1+) transport independent manner, by transmitting the VEGF-induced ROS signal through a sulfenylation at Cys-189 leadin g to a subsequent disulfide bond formation between SLC31A1 and KDR. The SLC31A1-KDR complex is then co-internalized to early endosomes, driving a sustained VEGFR2 signaling. Its function is as follows. Mobilizes copper(1+) out of the endosomal compartment, making copper(1+) available for export out of the cells. The sequence is that of High affinity copper uptake protein 1 from Homo sapiens (Human).